We begin with the raw amino-acid sequence, 360 residues long: Probable ribonucleoside-diphosphate reductase small subunit 376L (360 aa).

Positions 67, 98, and 101 each coordinate Fe cation. Residue tyrosine 105 is part of the active site. Positions 172, 206, and 209 each coordinate Fe cation.

This sequence belongs to the ribonucleoside diphosphate reductase small chain family. Heterotetramer composed of a homodimer of the large subunit (R1) and a homodimer of the small subunit (R2). Larger multisubunit protein complex are also active, composed of (R1)n(R2)n. The cofactor is Fe cation.

The catalysed reaction is a 2'-deoxyribonucleoside 5'-diphosphate + [thioredoxin]-disulfide + H2O = a ribonucleoside 5'-diphosphate + [thioredoxin]-dithiol. Functionally, ribonucleoside-diphosphate reductase holoenzyme provides the precursors necessary for viral DNA synthesis. Allows virus growth in non-dividing cells. Catalyzes the biosynthesis of deoxyribonucleotides from the corresponding ribonucleotides. The sequence is that of Probable ribonucleoside-diphosphate reductase small subunit 376L from Acheta domesticus (House cricket).